The sequence spans 488 residues: Inosine-5'-monophosphate dehydrogenase (488 aa).

CBS domains are found at residues 95-153 and 157-216; these read VISN…SIKI and MTKE…AKDE. NAD(+) is bound by residues aspartate 250 and 300-302; that span reads GIG. Glycine 302 and glycine 304 together coordinate K(+). Serine 305 provides a ligand contact to IMP. Cysteine 307 contacts K(+). Cysteine 307 functions as the Thioimidate intermediate in the catalytic mechanism. IMP contacts are provided by residues 340-342, 363-364, and 387-391; these read DGG, GS, and YRGMG. Arginine 403 serves as the catalytic Proton acceptor. An IMP-binding site is contributed by glutamate 417. A disordered region spans residues 467-488; that stretch reads AGLAESHPHDVQITKESPNYSF. Positions 471, 472, and 473 each coordinate K(+).

This sequence belongs to the IMPDH/GMPR family. As to quaternary structure, homotetramer. It depends on K(+) as a cofactor.

The catalysed reaction is IMP + NAD(+) + H2O = XMP + NADH + H(+). The protein operates within purine metabolism; XMP biosynthesis via de novo pathway; XMP from IMP: step 1/1. Mycophenolic acid (MPA) is a non-competitive inhibitor that prevents formation of the closed enzyme conformation by binding to the same site as the amobile flap. In contrast, mizoribine monophosphate (MZP) is a competitive inhibitor that induces the closed conformation. MPA is a potent inhibitor of mammalian IMPDHs but a poor inhibitor of the bacterial enzymes. MZP is a more potent inhibitor of bacterial IMPDH. Functionally, catalyzes the conversion of inosine 5'-phosphate (IMP) to xanthosine 5'-phosphate (XMP), the first committed and rate-limiting step in the de novo synthesis of guanine nucleotides, and therefore plays an important role in the regulation of cell growth. The chain is Inosine-5'-monophosphate dehydrogenase from Staphylococcus saprophyticus subsp. saprophyticus (strain ATCC 15305 / DSM 20229 / NCIMB 8711 / NCTC 7292 / S-41).